The chain runs to 277 residues: Co-chaperone protein DjlA (277 aa).

The Periplasmic segment spans residues 1 to 6 (MRYWGK). The chain crosses the membrane as a helical span at residues 7-31 (LLGLVLGVMYAPGVVGALLGLLVGH). The Cytoplasmic segment spans residues 32 to 277 (MVDRALGAKR…DLIKREKGFK (246 aa)). A J domain is found at 211 to 277 (DACKVLGVNS…DLIKREKGFK (67 aa)).

As to quaternary structure, homodimer.

It localises to the cell inner membrane. Its function is as follows. Regulatory DnaK co-chaperone. Direct interaction between DnaK and DjlA is needed for the induction of the wcaABCDE operon, involved in the synthesis of a colanic acid polysaccharide capsule, possibly through activation of the RcsB/RcsC phosphotransfer signaling pathway. The colanic acid capsule may help the bacterium survive conditions outside the host. This Yersinia pestis protein is Co-chaperone protein DjlA.